The primary structure comprises 73 residues: Pollen allergen Amb t 5 (73 aa).

An N-terminal signal peptide occupies residues 1–20; sequence MKNIFMLTLFILIITSTIKA. Positions 21–33 are excised as a propeptide; that stretch reads IGSTNEVDEIKQE. Intrachain disulfides connect cysteine 38/cysteine 68, cysteine 44/cysteine 59, cysteine 51/cysteine 61, and cysteine 52/cysteine 72.

Monomer.

The sequence is that of Pollen allergen Amb t 5 from Ambrosia trifida (Giant ragweed).